Consider the following 118-residue polypeptide: Small ribosomal subunit protein uS13 (118 aa).

The tract at residues 91 to 118 (HRRGLPVRGQRTKTNARTRKGPRKPIKK) is disordered.

It belongs to the universal ribosomal protein uS13 family. Part of the 30S ribosomal subunit. Forms a loose heterodimer with protein S19. Forms two bridges to the 50S subunit in the 70S ribosome.

Its function is as follows. Located at the top of the head of the 30S subunit, it contacts several helices of the 16S rRNA. In the 70S ribosome it contacts the 23S rRNA (bridge B1a) and protein L5 of the 50S subunit (bridge B1b), connecting the 2 subunits; these bridges are implicated in subunit movement. Contacts the tRNAs in the A and P-sites. This chain is Small ribosomal subunit protein uS13, found in Pectobacterium atrosepticum (strain SCRI 1043 / ATCC BAA-672) (Erwinia carotovora subsp. atroseptica).